A 380-amino-acid chain; its full sequence is MGIHGLAKLIADQAPSAIKEQDIKNYFGRKIAIDASMCMYQFLVAVRQDGNVLQNENGETTSHLMGMFYRTIRMLEHGIKPVYVFDGKPPQLKSGELEKRGERRAEAEKLLAQAQEAGEQENIDKFSKRLVKVTQQHNDECKKLLTLMGVPYIEAPCEAEASCAALVKAGKVFATATEDMDGLTFGTGVLLRHLTASEAKKLPIQEFQFTRLLQDINLTHEQFIDLCILLGCDYCGTIKGIGPKRAIDLIRQHGSIEEILENIDSSKHPAPEDWLYKEARGLFLQPDVVDCSTVDLKWSEPDEDALIQFMCAEKQFSEDRIKNGCKKILKSRQGSTQGRLDTFFTITGSLSSKRKEPETKGSNKKKQKTGATPGKFKKGK.

An N-domain region spans residues 1–104; sequence MGIHGLAKLI…GELEKRGERR (104 aa). Residue Asp34 coordinates Mg(2+). DNA is bound by residues Arg47 and Arg70. Residues Asp86, Glu158, Glu160, Asp179, and Asp181 each coordinate Mg(2+). Positions 122-253 are I-domain; the sequence is NIDKFSKRLV…KRAIDLIRQH (132 aa). Glu158 contacts DNA. Residues Gly231 and Asp233 each contribute to the DNA site. A Mg(2+)-binding site is contributed by Asp233. An interaction with PCNA region spans residues 336–344; sequence TQGRLDTFF. Residues 348 to 380 form a disordered region; sequence GSLSSKRKEPETKGSNKKKQKTGATPGKFKKGK.

This sequence belongs to the XPG/RAD2 endonuclease family. FEN1 subfamily. As to quaternary structure, interacts with PCNA. Three molecules of fen1 bind to one PCNA trimer with each molecule binding to one PCNA monomer. PCNA stimulates the nuclease activity without altering cleavage specificity. It depends on Mg(2+) as a cofactor. Phosphorylated. Phosphorylation upon DNA damage induces relocalization to the nuclear plasma.

The protein localises to the nucleus. It localises to the nucleolus. Its subcellular location is the nucleoplasm. The protein resides in the mitochondrion. Structure-specific nuclease with 5'-flap endonuclease and 5'-3' exonuclease activities involved in DNA replication and repair. During DNA replication, cleaves the 5'-overhanging flap structure that is generated by displacement synthesis when DNA polymerase encounters the 5'-end of a downstream Okazaki fragment. It enters the flap from the 5'-end and then tracks to cleave the flap base, leaving a nick for ligation. Also involved in the long patch base excision repair (LP-BER) pathway, by cleaving within the apurinic/apyrimidinic (AP) site-terminated flap. Acts as a genome stabilization factor that prevents flaps from equilibrating into structures that lead to duplications and deletions. Also possesses 5'-3' exonuclease activity on nicked or gapped double-stranded DNA, and exhibits RNase H activity. Also involved in replication and repair of rDNA and in repairing mitochondrial DNA. In Salmo salar (Atlantic salmon), this protein is Flap endonuclease 1 (fen1).